A 212-amino-acid chain; its full sequence is Large ribosomal subunit protein bL25 (212 aa).

The tract at residues 190–212 is disordered; it reads IAEAGDALAEPEVISKGSGEADE.

This sequence belongs to the bacterial ribosomal protein bL25 family. CTC subfamily. In terms of assembly, part of the 50S ribosomal subunit; part of the 5S rRNA/L5/L18/L25 subcomplex. Contacts the 5S rRNA. Binds to the 5S rRNA independently of L5 and L18.

This is one of the proteins that binds to the 5S RNA in the ribosome where it forms part of the central protuberance. This Rhodopirellula baltica (strain DSM 10527 / NCIMB 13988 / SH1) protein is Large ribosomal subunit protein bL25.